Consider the following 55-residue polypeptide: Riparin-1.5 acid (55 aa).

The signal sequence occupies residues 1-15 (MKIIVFLAVLMLVSA). The propeptide occupies 16–41 (QVCLVSAAEMEHSSDNELSSRDLVKR). Residues Cys47 and Cys53 are joined by a disulfide bond. A propeptide spanning residues 54 to 55 (NH) is cleaved from the precursor.

In terms of tissue distribution, expressed by the skin glands.

It localises to the secreted. In Crinia riparia (Streambank froglet), this protein is Riparin-1.5 acid.